A 114-amino-acid chain; its full sequence is MGKLTLLLVVLLGWLQYSLWVGKNGVHDYMRVKQDVATQQANNAKLKSRNDQLFAEIDDLNGGQEAIEERARNELGMIKPGETFYRLVPDQNKRRTVGTASQSVASYPSVTASH.

Over 1–3 (MGK) the chain is Cytoplasmic. Residues 4-21 (LTLLLVVLLGWLQYSLWV) form a helical membrane-spanning segment. Topologically, residues 22-114 (GKNGVHDYMR…ASYPSVTASH (93 aa)) are periplasmic. A coiled-coil region spans residues 31 to 62 (RVKQDVATQQANNAKLKSRNDQLFAEIDDLNG).

The protein belongs to the FtsB family. As to quaternary structure, part of a complex composed of FtsB, FtsL and FtsQ.

The protein resides in the cell inner membrane. In terms of biological role, essential cell division protein. May link together the upstream cell division proteins, which are predominantly cytoplasmic, with the downstream cell division proteins, which are predominantly periplasmic. This chain is Cell division protein FtsB, found in Edwardsiella ictaluri (strain 93-146).